The primary structure comprises 130 residues: Small ribosomal subunit protein uS9 (130 aa).

The protein belongs to the universal ribosomal protein uS9 family.

The polypeptide is Small ribosomal subunit protein uS9 (Thiobacillus denitrificans (strain ATCC 25259 / T1)).